Here is a 351-residue protein sequence, read N- to C-terminus: Outer membrane protein A (351 aa).

Residues Met-1 to Ala-21 form the signal peptide. The next 8 beta stranded transmembrane spans lie at Thr-27–Ser-37, Gln-55–Val-66, Val-70–Trp-78, Gln-96–Pro-107, Leu-112–Gly-120, Pro-147–Ala-156, Ile-161–Gln-168, and Leu-187–Arg-195. 4 tandem repeats follow at residues Ala-206–Pro-207, Ala-208–Pro-209, Ala-210–Pro-211, and Ala-212–Pro-213. Residues Ala-206–Pro-213 form a 4 X 2 AA tandem repeats of A-P region. Residues Val-215–Lys-343 form the OmpA-like domain. Cys-316 and Cys-328 are disulfide-bonded.

This sequence belongs to the outer membrane OOP (TC 1.B.6) superfamily. OmpA family. As to quaternary structure, monomer and homodimer.

The protein localises to the cell outer membrane. In terms of biological role, with TolR probably plays a role in maintaining the position of the peptidoglycan cell wall in the periplasm. Acts as a porin with low permeability that allows slow penetration of small solutes; an internal gate slows down solute passage. Required for conjugation with F-type plasmids; probably serves as the mating receptor on recipient cells. The polypeptide is Outer membrane protein A (Escherichia fergusonii (strain ATCC 35469 / DSM 13698 / CCUG 18766 / IAM 14443 / JCM 21226 / LMG 7866 / NBRC 102419 / NCTC 12128 / CDC 0568-73)).